A 469-amino-acid chain; its full sequence is Glutamate--tRNA ligase (469 aa).

A 'HIGH' region motif is present at residues 9–19 (PSPTGFLHVGG). The Zn(2+) site is built by C98, C100, C125, and D127. Residues 236-240 (KLSKR) carry the 'KMSKS' region motif. K239 provides a ligand contact to ATP.

The protein belongs to the class-I aminoacyl-tRNA synthetase family. Glutamate--tRNA ligase type 1 subfamily. In terms of assembly, monomer. It depends on Zn(2+) as a cofactor.

It localises to the cytoplasm. The catalysed reaction is tRNA(Glu) + L-glutamate + ATP = L-glutamyl-tRNA(Glu) + AMP + diphosphate. Functionally, catalyzes the attachment of glutamate to tRNA(Glu) in a two-step reaction: glutamate is first activated by ATP to form Glu-AMP and then transferred to the acceptor end of tRNA(Glu). The sequence is that of Glutamate--tRNA ligase from Shewanella putrefaciens (strain CN-32 / ATCC BAA-453).